The sequence spans 509 residues: Ribonuclease E/G-like protein (509 aa).

Positions S35–R117 constitute an S1 motif domain. Mg(2+)-binding residues include D296 and D339.

It belongs to the RNase E/G family. Requires Mg(2+) as cofactor.

Its subcellular location is the plastid. It is found in the chloroplast stroma. In terms of biological role, involved in intercistronic processing of primary transcripts from chloroplast operons. The endonucleolytic activity of the enzyme depends on the number of phosphates at the 5' end, is inhibited by structured RNA, and preferentially cleaves A/U-rich sequences. In Pyropia yezoensis (Susabi-nori), this protein is Ribonuclease E/G-like protein (rne).